We begin with the raw amino-acid sequence, 229 residues long: uncharacterized protein (229 aa).

A disordered region spans residues 1–102; sequence MKLLGRKKSY…AASKAQITDR (102 aa). A compositionally biased stretch (basic residues) spans 73–94; sequence ARRKSLAPPKCHRAERRAKRAA. The next 2 helical transmembrane spans lie at 137 to 157 and 159 to 179; these read LGLF…VPQL and LYMS…GIIL.

The protein localises to the cell membrane. This is an uncharacterized protein from Mycobacterium leprae (strain TN).